We begin with the raw amino-acid sequence, 617 residues long: KIF-binding protein (617 aa).

The segment at Ala-48–Gly-83 is disordered. Residues Pro-54–Pro-66 are compositionally biased toward acidic residues. Ser-174 is modified (phosphoserine).

This sequence belongs to the KIF-binding protein family. In terms of assembly, interacts with KIF1B; positively regulates KIF1B microtubule motor activity. Interacts with STMN2. In terms of tissue distribution, in the embryo it is expressed in cortical neurons; expression increases during neuronal development.

It is found in the cytoplasm. The protein resides in the cytoskeleton. In terms of biological role, activator of KIF1B plus-end-directed microtubule motor activity. Required for organization of axonal microtubules, and axonal outgrowth and maintenance during peripheral and central nervous system development. This Mus musculus (Mouse) protein is KIF-binding protein.